Consider the following 512-residue polypeptide: Maturase K (512 aa).

This sequence belongs to the intron maturase 2 family. MatK subfamily.

Its subcellular location is the plastid. The protein localises to the chloroplast. Its function is as follows. Usually encoded in the trnK tRNA gene intron. Probably assists in splicing its own and other chloroplast group II introns. This is Maturase K from Erythranthe guttata (Yellow monkey flower).